The chain runs to 545 residues: MAREPRKNAALDAQSAEDQTGLLTVKVEKEEASALTAEVRAPCSPARGPERSRQRFRGFRYPEAAGPREALSRLRELCGQWLQPEMHSKEQILELLVLEQFLTILPGNLQSWVREQHPESGEEVVVLLEYLERQLDEPAPQVPVGDQGQELLCCKMALLTQTQGSQSSQCQPMKALFKHESLGSQPLHDRVLQVPGLAQGGCCREDAMVASRLTPGSQGLLKMEDVALTLTPGWTQLDSSQVNLYRDEKQENHSSLVSLGGEIQTKSRDLPPVKKLPEKEHGKICHLREDIAQIPTHAEAGEQEGRLQRKQKNAIGSRRHYCHECGKSFAQSSGLTKHRRIHTGEKPYECEDCGKTFIGSSALVIHQRVHTGEKPYECEECGKVFSHSSNLIKHQRTHTGEKPYECDDCGKTFSQSCSLLEHHKIHTGEKPYQCNMCGKAFRRNSHLLRHQRIHGDKNVQNPEHGESWESQGRTESQWENTEAPVSYKCNECERSFTRNRSLIEHQKIHTGEKPYQCDTCGKGFTRTSYLVQHQRSHVGKKTLSQ.

Residues Met1–Leu22 form a disordered region. Glycyl lysine isopeptide (Lys-Gly) (interchain with G-Cter in SUMO2) cross-links involve residues Lys26 and Lys29. The tract at residues Ala34 to Arg55 is disordered. An SCAN box domain is found at Arg53–Leu135. Residues Lys178 and Lys222 each participate in a glycyl lysine isopeptide (Lys-Gly) (interchain with G-Cter in SUMO2) cross-link. Positions Leu221 to Ser317 constitute a KRAB domain. 5 consecutive C2H2-type zinc fingers follow at residues His320–His342, Tyr348–His370, Tyr376–His398, Tyr404–His426, and Tyr432–His454. Basic and acidic residues predominate over residues Gly455–Ser467. The disordered stretch occupies residues Gly455 to Asn480. Polar residues predominate over residues Trp468–Asn480. 2 C2H2-type zinc fingers span residues Tyr487–His509 and Tyr515–His537.

It belongs to the krueppel C2H2-type zinc-finger protein family. As to expression, expressed in adult heart, brain, placenta, lung and kidney, but not in adult liver and skeletal muscle. In 17-day old embryo, detected in liver, skeletal muscle, brain, heart and small intestine.

It localises to the nucleus. Functionally, may be involved in the transcriptional activation of MDM2 and EP300 genes. The sequence is that of Zinc finger protein with KRAB and SCAN domains 4 (ZKSCAN4) from Homo sapiens (Human).